The primary structure comprises 225 residues: tRNA (guanine-N(1)-)-methyltransferase (225 aa).

S-adenosyl-L-methionine is bound by residues glycine 112 and 132–137; that span reads IGDYVL.

It belongs to the RNA methyltransferase TrmD family. In terms of assembly, homodimer.

It is found in the cytoplasm. It carries out the reaction guanosine(37) in tRNA + S-adenosyl-L-methionine = N(1)-methylguanosine(37) in tRNA + S-adenosyl-L-homocysteine + H(+). Functionally, specifically methylates guanosine-37 in various tRNAs. The chain is tRNA (guanine-N(1)-)-methyltransferase from Porphyromonas gingivalis (strain ATCC BAA-308 / W83).